We begin with the raw amino-acid sequence, 553 residues long: Putative transport protein YidE (553 aa).

5 helical membrane-spanning segments follow: residues 4–24, 28–48, 65–85, 95–115, and 158–178; these read IALTVSILALVAVVGLFIGNV, GIGLGIGGVLFGGIIVGHFVS, FGLILFVYTIGIQVGPGFFAS, LFAVLIVIIGGLVTAILHKLF, and MSYAMAYPFGICGILFTMWML. RCK C-terminal domains follow at residues 191 to 276 and 279 to 361; these read QQHE…VIGQ and DTSL…VLGN. 5 helical membrane passes run 371–391, 394–414, 439–459, 464–484, and 533–553; these read MLPVFIGIGLGVLLGSIPVFV, FPAALKLGLAGGPLIMALILG, IVLFLSVVGLKSGGDFVNTLV, LSWIGYGALITAVPLITVGIL, and LVMFLRIITPQLLAVLFWSIG.

Belongs to the AAE transporter (TC 2.A.81) family. YidE subfamily.

Its subcellular location is the cell membrane. The polypeptide is Putative transport protein YidE (Shigella dysenteriae serotype 1 (strain Sd197)).